We begin with the raw amino-acid sequence, 328 residues long: Peroxidase 59 (328 aa).

The signal sequence occupies residues M1–A28. Position 29 is a pyrrolidone carboxylic acid (Q29). Intrachain disulfides connect C39-C116, C72-C77, C122-C323, and C200-C232. Residue H70 is the Proton acceptor of the active site. 5 residues coordinate Ca(2+): D71, V74, G76, D78, and S80. P163 contacts substrate. N-linked (GlcNAc...) asparagine glycosylation occurs at N182. H193 contacts heme b. A Ca(2+)-binding site is contributed by T194. N-linked (GlcNAc...) asparagine glycosylation is found at N209 and N239. Ca(2+) is bound by residues D245, T248, T251, and D253. 2 N-linked (GlcNAc...) asparagine glycosylation sites follow: N281 and N310.

The protein belongs to the peroxidase family. Classical plant (class III) peroxidase subfamily. It depends on heme b as a cofactor. The cofactor is Ca(2+). Slightly expressed in roots.

It localises to the secreted. The catalysed reaction is 2 a phenolic donor + H2O2 = 2 a phenolic radical donor + 2 H2O. Removal of H(2)O(2), oxidation of toxic reductants, biosynthesis and degradation of lignin, suberization, auxin catabolism, response to environmental stresses such as wounding, pathogen attack and oxidative stress. These functions might be dependent on each isozyme/isoform in each plant tissue. The polypeptide is Peroxidase 59 (PER59) (Arabidopsis thaliana (Mouse-ear cress)).